Reading from the N-terminus, the 349-residue chain is Protein-glutamate methylesterase/protein-glutamine glutaminase (349 aa).

One can recognise a Response regulatory domain in the interval 5-122 (RVLSVDDSAL…REGMLAYSEM (118 aa)). D56 carries the 4-aspartylphosphate modification. The CheB-type methylesterase domain occupies 152 to 344 (LLSSEKLIAI…QQMLATISAG (193 aa)). Catalysis depends on residues S164, H190, and D286.

It belongs to the CheB family. In terms of processing, phosphorylated by CheA. Phosphorylation of the N-terminal regulatory domain activates the methylesterase activity.

It localises to the cytoplasm. It catalyses the reaction [protein]-L-glutamate 5-O-methyl ester + H2O = L-glutamyl-[protein] + methanol + H(+). The enzyme catalyses L-glutaminyl-[protein] + H2O = L-glutamyl-[protein] + NH4(+). Involved in chemotaxis. Part of a chemotaxis signal transduction system that modulates chemotaxis in response to various stimuli. Catalyzes the demethylation of specific methylglutamate residues introduced into the chemoreceptors (methyl-accepting chemotaxis proteins or MCP) by CheR. Also mediates the irreversible deamidation of specific glutamine residues to glutamic acid. This chain is Protein-glutamate methylesterase/protein-glutamine glutaminase, found in Shigella flexneri.